Consider the following 433-residue polypeptide: Ribosome biogenesis protein WDR12 homolog (433 aa).

Residues 21-102 (VEVFVVSYRH…ESVISIECIV (82 aa)) are ubiquitin-like (UBL) domain. 7 WD repeats span residues 114–151 (ALLDWIGAIRCNDKFIASATYGGELVLWNHYGKKLTSS), 153–194 (LHEE…SSTF), 203–242 (GHERSVEAIAVNTDGTRTVSGGFDKMLKVWNTDKDDTSTV), 270–310 (GHKD…QINT), 312–351 (AAKKAFTSISVCCSSGMLITGSVDPVVRLWDPRSHEGTLV), 357–397 (GHCG…TPLY), and 401–433 (GHSDRILCCDWSVNELIVSGGVDCTMKTYRRKM).

This sequence belongs to the WD repeat WDR12/YTM1 family.

It is found in the nucleus. Its subcellular location is the nucleolus. The protein resides in the nucleoplasm. Its function is as follows. Required for maturation of ribosomal RNAs and formation of the large ribosomal subunit. The sequence is that of Ribosome biogenesis protein WDR12 homolog from Brugia malayi (Filarial nematode worm).